A 747-amino-acid polypeptide reads, in one-letter code: MEVKRLKVTELRSELQRRGLDSRGLKVDLAQRLQEALDAEMLEDEAGGGGAGPGGACKAEPRPVAASGGGPGGDEEEDEEEEEEDEEALLEDEDEEPPPAQALGQAAQPPPEPPEAAAMEAAAEPDASEKPAEATAGSGGVNGGEEQGLGKREEDEPEERSGDETPGSEVPGDKAAEEQGDDQDSEKSKPAGSDGERRGVKRQRDEKDEHGRAYYEFREEAYHSRSKSPLPPEEEAKDEEEDQTLVNLDTYTSDLHFQVSKDRYGGQPLFSEKFPTLWSGARSTYGVTKGKVCFEAKVTQNLPMKEGCTEVSLLRVGWSVDFSRPQLGEDEFSYGFDGRGLKAENGQFEEFGQTFGENDVIGCFANFETEEVELSFSKNGEDLGVAFWISKDSLADRALLPHVLCKNCVVELNFGQKEEPFFPPPEEFVFIHAVPVEERVRTAVPPKTIEECEVILMVGLPGSGKTQWALKYAKENPEKRYNVLGAETVLNQMRMKGLEEPEMDPKSRDLLVQQASQCLSKLVQIASRTKRNFILDQCNVYNSGQRRKLLLFKTFSRKVVVVVPNEEDWKKRLELRKEVEGDDVPESIMLEMKANFSLPEKCDYMDEVTYGELEKEEAQPIVTKYKEEARKLLPPSEKRTNRRNNRNKRNRQNRSRGQGYVGGQRRGYDNRAYGQQYWGQPGNRGGYRNFYDRYRGDYDRFYGRDYEYNRYRDYYRQYNRDWQSYYYHHPQDRDRYYRNYYGYQGYR.

One can recognise an SAP domain in the interval 3-37 (VKRLKVTELRSELQRRGLDSRGLKVDLAQRLQEAL). 2 disordered regions span residues 40–242 (EMLE…EEED) and 627–666 (EEAR…GQRR). A compositionally biased stretch (acidic residues) spans 73 to 97 (GDEEEDEEEEEEDEEALLEDEDEEP). The segment covering 115 to 125 (EAAAMEAAAEP) has biased composition (low complexity). Residues 137–147 (GSGGVNGGEEQ) are compositionally biased toward gly residues. A compositionally biased stretch (basic and acidic residues) spans 148 to 163 (GLGKREEDEPEERSGD). S161 bears the Phosphoserine mark. At T165 the chain carries Phosphothreonine. Phosphoserine is present on residues S168, S185, S188, S226, and S228. Residues 185-223 (SEKSKPAGSDGERRGVKRQRDEKDEHGRAYYEFREEAYH) are compositionally biased toward basic and acidic residues. A B30.2/SPRY domain is found at 226–419 (SKSPLPPEEE…VELNFGQKEE (194 aa)). Residues 232-242 (PEEEAKDEEED) are compositionally biased toward acidic residues. The span at 627 to 639 (EEARKLLPPSEKR) shows a compositional bias: basic and acidic residues. Residues 640–654 (TNRRNNRNKRNRQNR) are compositionally biased toward basic residues. Omega-N-methylarginine occurs at positions 656, 684, 738, and 747.

In terms of assembly, binds to MLF1 and retains it in the nucleus.

It is found in the nucleus. The polypeptide is Heterogeneous nuclear ribonucleoprotein U-like protein 2 (HNRNPUL2) (Homo sapiens (Human)).